Here is a 94-residue protein sequence, read N- to C-terminus: HssA/B-like protein 51 (94 aa).

The segment at 1–25 (MTLFSSISSISNPMTNSKSRISSFG) is disordered.

The protein belongs to the hssA/B family.

The chain is HssA/B-like protein 51 (hssl51) from Dictyostelium discoideum (Social amoeba).